The primary structure comprises 289 residues: Trihelix transcription factor GT-3b (289 aa).

Residues 42–98 (WSVEETKELIGIRGELDQTFMETKRNKLLWEVISNKMRDKSFPRSPEQCKCKWKNLV) enclose the Myb-like domain. Residues 65–81 (KRNKLLWEVISNKMRDK) carry the Bipartite nuclear localization signal motif. Positions 137-200 (ESEGGGGGTS…SNSSNSNNGV (64 aa)) are disordered. Residues 156 to 168 (SDEEEENVNEELV) are compositionally biased toward acidic residues. The Nuclear localization signal motif lies at 179-188 (PKKNIAKKRK). Positions 190-199 (GSNSSNSNNG) are enriched in low complexity. Residues 223–275 (EAREKERAEKEEEWRRKMEELEKERLAMERMWRDREEQRRSREEMRAEKRDSL) are a coiled coil.

In terms of assembly, heterodimer with GT-3A. Associated with the mediator complex.

The protein resides in the nucleus. Probable transcription factor that may play a role in the induction of CAM4 in response to pathogen and salt. In Arabidopsis thaliana (Mouse-ear cress), this protein is Trihelix transcription factor GT-3b (GT-3B).